The sequence spans 511 residues: Maturase K (511 aa).

Belongs to the intron maturase 2 family. MatK subfamily.

It is found in the plastid. The protein localises to the chloroplast. In terms of biological role, usually encoded in the trnK tRNA gene intron. Probably assists in splicing its own and other chloroplast group II introns. The sequence is that of Maturase K from Oryza nivara (Indian wild rice).